A 185-amino-acid chain; its full sequence is MINDIINDSKSRMEKSLGSLKTELAKLRTGRAHPSLLEHIKVDYYNVETPLSQVASIAIENPRTLSITPWEKNMVGPIEKAIQKADLGLNPATVGMVIRVPLPPLTEERRKELARVVREEAEHARVAIRNIRREANNDLKELMKEKEISEDEERRAQTAIQKLTDAQIAEVDKMASQKEADLMAV.

This sequence belongs to the RRF family.

Its subcellular location is the cytoplasm. Responsible for the release of ribosomes from messenger RNA at the termination of protein biosynthesis. May increase the efficiency of translation by recycling ribosomes from one round of translation to another. This is Ribosome-recycling factor from Coxiella burnetii (strain CbuK_Q154) (Coxiella burnetii (strain Q154)).